The chain runs to 78 residues: Xibalbin-13 1 (78 aa).

An N-terminal signal peptide occupies residues 1–27; it reads MKEANTRRYIHLCLVVVLVSTIITTEA. Residues 28 to 31 constitute a propeptide that is removed on maturation; the sequence is EDDR. 4 disulfide bridges follow: cysteine 34-cysteine 49, cysteine 41-cysteine 54, cysteine 48-cysteine 65, and cysteine 56-cysteine 63. Serine 76 bears the Serine amide mark.

The protein belongs to the xibalbin-13 family. Expressed by the venom gland.

Its subcellular location is the secreted. Functionally, probable neurotoxin. Strongly inhibits voltage-gated potassium channels (Kv1.1/KCNA1, Kv1.2/KCNA2, Kv1.3/KCNA3, and Kv1.6/KCNA6) and mildly inhibits sodium channels (Nav1.2/SCN2A, Nav1.4/SCN4A, Nav1.5/SCN5A, Nav1.6/SCN8A, and BgNav). Induces activation of protein kinase A type II (PKA-II) and MAP kinase Erk1/2 in primary nociceptive and non-nociceptive sensory neurons. Does not show cytotoxic activity. Does not have an impact on Ca2+, cAMP, and NO signaling in the cell types analyzed. Does not interfere with the adhesion of leukocytes to endothelial cells. The protein is Xibalbin-13 1 of Xibalbanus tulumensis (Blind cave remipede).